Here is a 125-residue protein sequence, read N- to C-terminus: Succinate dehydrogenase cytochrome b556 subunit (125 aa).

At 1-22 (MNAKRPVNLDLTKFHFPPMAIL) the chain is on the cytoplasmic side. A helical transmembrane segment spans residues 23–48 (SIGHRISGFVLFLCMPLMFYLLHRAT). At 49–65 (ASAESFYHLHQLLLHNG) the chain is on the periplasmic side. The chain crosses the membrane as a helical span at residues 66 to 86 (WIKLAVWIMLSATLFHLFAGI). His-81 is a heme binding site. The Cytoplasmic segment spans residues 87 to 104 (RHLAMDLGFWESVPEGRI). Residues 105-125 (SAYTVFVVSFIAIVLAGVWIW) traverse the membrane as a helical segment.

This sequence belongs to the cytochrome b560 family. Part of an enzyme complex containing four subunits: a flavoprotein, an iron-sulfur protein, plus two membrane-anchoring proteins, SdhC and SdhD. The complex can form homotrimers. Heme is required as a cofactor.

It is found in the cell inner membrane. The protein operates within carbohydrate metabolism; tricarboxylic acid cycle. Membrane-anchoring subunit of succinate dehydrogenase (SDH). The polypeptide is Succinate dehydrogenase cytochrome b556 subunit (sdhC) (Coxiella burnetii (strain RSA 493 / Nine Mile phase I)).